Consider the following 941-residue polypeptide: Isoleucine--tRNA ligase (941 aa).

Residues 58–68 carry the 'HIGH' region motif; it reads PYANGNIHLGH. L-isoleucyl-5'-AMP is bound at residue E564. Positions 605-609 match the 'KMSKS' region motif; the sequence is KMSKS. K608 provides a ligand contact to ATP. Zn(2+) contacts are provided by C904, C907, C924, and C927.

Belongs to the class-I aminoacyl-tRNA synthetase family. IleS type 1 subfamily. Monomer. Requires Zn(2+) as cofactor.

It is found in the cytoplasm. The catalysed reaction is tRNA(Ile) + L-isoleucine + ATP = L-isoleucyl-tRNA(Ile) + AMP + diphosphate. Catalyzes the attachment of isoleucine to tRNA(Ile). As IleRS can inadvertently accommodate and process structurally similar amino acids such as valine, to avoid such errors it has two additional distinct tRNA(Ile)-dependent editing activities. One activity is designated as 'pretransfer' editing and involves the hydrolysis of activated Val-AMP. The other activity is designated 'posttransfer' editing and involves deacylation of mischarged Val-tRNA(Ile). The sequence is that of Isoleucine--tRNA ligase from Hahella chejuensis (strain KCTC 2396).